The sequence spans 486 residues: Amyloid-beta A4 precursor protein-binding family B member 3 (486 aa).

In terms of domain architecture, WW spans 29 to 61 (TGLPPGWRKIRDAAGTYYWHVPSGSTQWQRPTW). PID domains are found at residues 113 to 280 (EPGA…QVEL) and 285 to 440 (SQAA…RTSS). The tract at residues 438-460 (TSSMDSPGGPLPPPLLKGGAGGA) is disordered.

In terms of assembly, interacts with APP (via intracellular domain). Interacts with APLP1 and APLP2 (via intracellular domain).

Its subcellular location is the cytoplasm. The protein localises to the nucleus. Its function is as follows. May modulate the internalization of amyloid-beta precursor protein. In Mus musculus (Mouse), this protein is Amyloid-beta A4 precursor protein-binding family B member 3.